The chain runs to 231 residues: uncharacterized protein (231 aa).

A helical membrane pass occupies residues 10-30 (SQNIFFIAIVIFILSSVILYH).

The protein localises to the membrane. This is an uncharacterized protein from Rickettsia prowazekii (strain Madrid E).